Reading from the N-terminus, the 618-residue chain is Chaperone protein DnaK (618 aa).

A Phosphothreonine; by autocatalysis modification is found at Thr-175. Positions 579–618 are disordered; it reads GAPGAEGFDSNMAGEANAGQNANNDDNVVDADYKVEDDEK. A compositionally biased stretch (low complexity) spans 591–604; it reads AGEANAGQNANNDD.

The protein belongs to the heat shock protein 70 family.

Acts as a chaperone. This is Chaperone protein DnaK from Clostridium tetani (strain Massachusetts / E88).